The sequence spans 198 residues: Glycerol-3-phosphate acyltransferase (198 aa).

A run of 5 helical transmembrane segments spans residues Tyr2–Leu22, Leu48–Ile70, Met75–Leu97, Val111–Ile131, and Ile154–Phe174.

The protein belongs to the PlsY family. As to quaternary structure, probably interacts with PlsX.

Its subcellular location is the cell membrane. It carries out the reaction an acyl phosphate + sn-glycerol 3-phosphate = a 1-acyl-sn-glycero-3-phosphate + phosphate. It participates in lipid metabolism; phospholipid metabolism. Functionally, catalyzes the transfer of an acyl group from acyl-phosphate (acyl-PO(4)) to glycerol-3-phosphate (G3P) to form lysophosphatidic acid (LPA). This enzyme utilizes acyl-phosphate as fatty acyl donor, but not acyl-CoA or acyl-ACP. The sequence is that of Glycerol-3-phosphate acyltransferase from Thermoanaerobacter pseudethanolicus (strain ATCC 33223 / 39E) (Clostridium thermohydrosulfuricum).